The chain runs to 139 residues: uncharacterized protein (139 aa).

3 helical membrane-spanning segments follow: residues 19 to 39 (CIIF…FILG), 64 to 84 (IFNV…FNLF), and 89 to 109 (AITI…WILG).

The protein resides in the cell membrane. This is an uncharacterized protein from Methanocaldococcus jannaschii (strain ATCC 43067 / DSM 2661 / JAL-1 / JCM 10045 / NBRC 100440) (Methanococcus jannaschii).